Here is a 147-residue protein sequence, read N- to C-terminus: Putative protein CLUHP3 (147 aa).

The tract at residues 14–47 (KEPEGGRRRLSHPGNMGWMRPSQETTPPDRSHHS) is disordered.

This chain is Putative protein CLUHP3 (CLUHP3), found in Homo sapiens (Human).